The primary structure comprises 370 residues: Ubiquitin carboxyl-terminal hydrolase 12-B (370 aa).

In terms of domain architecture, USP spans 39–369 (FGLVNFGNTC…SGYILFYQSR (331 aa)). Cys-48 functions as the Nucleophile in the catalytic mechanism. The tract at residues 145–168 (KQEKQNGRIPNGNIDNENNNNTPD) is disordered. Over residues 155–165 (NGNIDNENNNN) the composition is skewed to low complexity. Zn(2+) is bound by residues Cys-186, Cys-189, Cys-233, and Cys-236. Catalysis depends on His-317, which acts as the Proton acceptor.

It belongs to the peptidase C19 family. USP12/USP46 subfamily. In terms of assembly, interacts with WDR48.

The enzyme catalyses Thiol-dependent hydrolysis of ester, thioester, amide, peptide and isopeptide bonds formed by the C-terminal Gly of ubiquitin (a 76-residue protein attached to proteins as an intracellular targeting signal).. Its function is as follows. Deubiquitinating enzyme. Has almost no deubiquitinating activity by itself and requires the interaction with wdr48 to have a high activity. In Xenopus laevis (African clawed frog), this protein is Ubiquitin carboxyl-terminal hydrolase 12-B (usp12-b).